We begin with the raw amino-acid sequence, 514 residues long: MAVWQSATGKVYLPPSTPVARVQSTDEYIQRTNIYYHANTDRLLTVGHPYFNVYNNNGDTLQVPKVSGNQHRVFRLKLPDPNRFALADMSVYNPDKERLVWACRGLEISRGQPLGVGSTGHPYFNKVKDTENSNSYTTTSTDDRQNTSFDPKQIQMFIVGCTPCIGEHWEKAIPCAEDQQQGLCPPIELKNTVIEDGDMADIGFGNMNFKTLQQNRSDVSLDIVNEICKYPDFLKMQNDVYGDACFFYARREQCYARHFFVRGGKTGDDIPAAQIDDGMMKNQYYIPGGQDQSQKDIGNAMYFPTVSGSLVSSDAQLFNRPFWLQRAQGHNNGILWANQMFVTVVDNTRNTNFSISVYTENGELKNITDYKSTQFREYLRHVEEYEISLILQLCKIPLKADVLAQINAMNSSLLEEWQLGFVPTPDTPIHDTYRYIDSLATRCPDKSPPKEKPDPYAKFNFWNVDLTERLSLDLDQYSLGRKFLFQAGLQQTTVNGTKSISRGSVRGTKRKRKN.

The interval 127–147 (VKDTENSNSYTTTSTDDRQNT) is disordered.

Belongs to the papillomaviridae L1 protein family. Self-assembles into homopentamers. The capsid has an icosahedral symmetry and consists of 72 capsomers, with each capsomer being a pentamer of L1. Interacts with the minor capsid protein L2; this interaction is necessary for viral genome encapsidation. Interacts with protein E2; this interaction enhances E2-dependent replication and transcription activation.

The protein resides in the virion. It localises to the host nucleus. Functionally, forms an icosahedral capsid with a T=7 symmetry and a 50 nm diameter. The capsid is composed of 72 pentamers linked to each other by disulfide bonds and associated with L2 proteins. Binds to heparan sulfate proteoglycans on cell surface of basal layer keratinocytes to provide initial virion attachment. This binding mediates a conformational change in the virus capsid that facilitates efficient infection. The virion enters the host cell via endocytosis. During virus trafficking, L1 protein dissociates from the viral DNA and the genomic DNA is released to the host nucleus. The virion assembly takes place within the cell nucleus. Encapsulates the genomic DNA together with protein L2. This Human papillomavirus type 8 protein is Major capsid protein L1.